The chain runs to 39 residues: Cytochrome b559 subunit beta (39 aa).

Residues 14–30 (WLAIHGLAVPTVSFLGS) form a helical membrane-spanning segment. Position 18 (His18) interacts with heme.

The protein belongs to the PsbE/PsbF family. As to quaternary structure, heterodimer of an alpha subunit and a beta subunit. PSII is composed of 1 copy each of membrane proteins PsbA, PsbB, PsbC, PsbD, PsbE, PsbF, PsbH, PsbI, PsbJ, PsbK, PsbL, PsbM, PsbT, PsbX, PsbY, PsbZ, Psb30/Ycf12, at least 3 peripheral proteins of the oxygen-evolving complex and a large number of cofactors. It forms dimeric complexes. Heme b is required as a cofactor.

The protein localises to the plastid. It is found in the chloroplast thylakoid membrane. Its function is as follows. This b-type cytochrome is tightly associated with the reaction center of photosystem II (PSII). PSII is a light-driven water:plastoquinone oxidoreductase that uses light energy to abstract electrons from H(2)O, generating O(2) and a proton gradient subsequently used for ATP formation. It consists of a core antenna complex that captures photons, and an electron transfer chain that converts photonic excitation into a charge separation. This chain is Cytochrome b559 subunit beta, found in Allium textile (Textile onion).